The sequence spans 181 residues: Large ribosomal subunit protein uL5 (181 aa).

This sequence belongs to the universal ribosomal protein uL5 family. Part of the 50S ribosomal subunit; part of the 5S rRNA/L5/L18/L25 subcomplex. Contacts the 5S rRNA and the P site tRNA. Forms a bridge to the 30S subunit in the 70S ribosome.

Its function is as follows. This is one of the proteins that bind and probably mediate the attachment of the 5S RNA into the large ribosomal subunit, where it forms part of the central protuberance. In the 70S ribosome it contacts protein S13 of the 30S subunit (bridge B1b), connecting the 2 subunits; this bridge is implicated in subunit movement. Contacts the P site tRNA; the 5S rRNA and some of its associated proteins might help stabilize positioning of ribosome-bound tRNAs. The polypeptide is Large ribosomal subunit protein uL5 (Colwellia psychrerythraea (strain 34H / ATCC BAA-681) (Vibrio psychroerythus)).